The primary structure comprises 261 residues: Hemin import ATP-binding protein HmuV (261 aa).

The ABC transporter domain occupies 5–241 (LTANAASFAI…DLLARVFDVD (237 aa)). 37–44 (GPNGAGKS) is a binding site for ATP.

The protein belongs to the ABC transporter superfamily. Heme (hemin) importer (TC 3.A.1.14.5) family. In terms of assembly, the complex is composed of two ATP-binding proteins (HmuV), two transmembrane proteins (HmuU) and a solute-binding protein (HmuT).

It localises to the cell inner membrane. Its function is as follows. Part of the ABC transporter complex HmuTUV involved in hemin import. Responsible for energy coupling to the transport system. The protein is Hemin import ATP-binding protein HmuV of Rhodopseudomonas palustris (strain BisB5).